The chain runs to 156 residues: Small ribosomal subunit protein uS7 (156 aa).

This sequence belongs to the universal ribosomal protein uS7 family. As to quaternary structure, part of the 30S ribosomal subunit. Contacts proteins S9 and S11.

In terms of biological role, one of the primary rRNA binding proteins, it binds directly to 16S rRNA where it nucleates assembly of the head domain of the 30S subunit. Is located at the subunit interface close to the decoding center, probably blocks exit of the E-site tRNA. This chain is Small ribosomal subunit protein uS7, found in Haemophilus influenzae (strain 86-028NP).